A 134-amino-acid chain; its full sequence is Aspartate 1-decarboxylase (134 aa).

Serine 25 acts as the Schiff-base intermediate with substrate; via pyruvic acid in catalysis. Serine 25 bears the Pyruvic acid (Ser) mark. Threonine 57 contacts substrate. The active-site Proton donor is the tyrosine 58. 73 to 75 (GAA) serves as a coordination point for substrate.

It belongs to the PanD family. Heterooctamer of four alpha and four beta subunits. It depends on pyruvate as a cofactor. Post-translationally, is synthesized initially as an inactive proenzyme, which is activated by self-cleavage at a specific serine bond to produce a beta-subunit with a hydroxyl group at its C-terminus and an alpha-subunit with a pyruvoyl group at its N-terminus.

It localises to the cytoplasm. The catalysed reaction is L-aspartate + H(+) = beta-alanine + CO2. It participates in cofactor biosynthesis; (R)-pantothenate biosynthesis; beta-alanine from L-aspartate: step 1/1. In terms of biological role, catalyzes the pyruvoyl-dependent decarboxylation of aspartate to produce beta-alanine. The chain is Aspartate 1-decarboxylase from Sulfurihydrogenibium sp. (strain YO3AOP1).